We begin with the raw amino-acid sequence, 307 residues long: Ribosomal protein uL3 glutamine methyltransferase (307 aa).

The protein belongs to the protein N5-glutamine methyltransferase family. PrmB subfamily.

The catalysed reaction is L-glutaminyl-[ribosomal protein uL3] + S-adenosyl-L-methionine = N(5)-methyl-L-glutaminyl-[ribosomal protein uL3] + S-adenosyl-L-homocysteine + H(+). Functionally, methylates large ribosomal subunit protein uL3 on a specific glutamine residue. The polypeptide is Ribosomal protein uL3 glutamine methyltransferase (Burkholderia pseudomallei (strain K96243)).